We begin with the raw amino-acid sequence, 505 residues long: Acetyl-coenzyme A carboxylase carboxyl transferase subunit beta, chloroplastic (505 aa).

Low complexity predominate over residues 189 to 205; it reads ESVSNSKSGSSSIRTGG. The interval 189–213 is disordered; sequence ESVSNSKSGSSSIRTGGNSSDFNRR. In terms of domain architecture, CoA carboxyltransferase N-terminal spans 228-499; that stretch reads LWVQCENCYG…NQNSSRALGS (272 aa). Zn(2+) contacts are provided by Cys-232, Cys-235, Cys-251, and Cys-254. A C4-type zinc finger spans residues 232–254; that stretch reads CENCYGLNYKKFVSFKMHICEQC.

Belongs to the AccD/PCCB family. Acetyl-CoA carboxylase is a heterohexamer composed of biotin carboxyl carrier protein, biotin carboxylase and 2 subunits each of ACCase subunit alpha and ACCase plastid-coded subunit beta (accD). Requires Zn(2+) as cofactor.

The protein resides in the plastid. The protein localises to the chloroplast stroma. It catalyses the reaction N(6)-carboxybiotinyl-L-lysyl-[protein] + acetyl-CoA = N(6)-biotinyl-L-lysyl-[protein] + malonyl-CoA. The protein operates within lipid metabolism; malonyl-CoA biosynthesis; malonyl-CoA from acetyl-CoA: step 1/1. Component of the acetyl coenzyme A carboxylase (ACC) complex. Biotin carboxylase (BC) catalyzes the carboxylation of biotin on its carrier protein (BCCP) and then the CO(2) group is transferred by the transcarboxylase to acetyl-CoA to form malonyl-CoA. The polypeptide is Acetyl-coenzyme A carboxylase carboxyl transferase subunit beta, chloroplastic (Calycanthus floridus var. glaucus (Eastern sweetshrub)).